The primary structure comprises 331 residues: Nucleoporin Nup35 (331 aa).

2 disordered regions span residues Met-1–Asn-63 and Ala-79–Asp-110. 3 stretches are compositionally biased toward polar residues: residues Ser-8–Tyr-20, His-35–Gly-56, and Gly-84–Pro-104. The 82-residue stretch at Arg-187–Asp-268 folds into the RRM Nup35-type domain.

It belongs to the Nup35 family. Interacts with Nup154.

It localises to the nucleus. It is found in the nuclear pore complex. In terms of biological role, functions as a component of the nuclear pore complex (NPC). May have a role in the organization of the inner nuclear membrane proteins at the nuclear envelope together with Nup154. This is Nucleoporin Nup35 from Drosophila melanogaster (Fruit fly).